Here is a 374-residue protein sequence, read N- to C-terminus: uncharacterized protein (374 aa).

The disordered stretch occupies residues Pro-182 to Val-201. Positions Pro-188–Ser-197 are enriched in polar residues.

This is an uncharacterized protein from Rattus norvegicus (Rat).